A 985-amino-acid polypeptide reads, in one-letter code: Serine/threonine-protein kinase N2 (985 aa).

The REM-1 1 domain maps to 33–109 (KLDFSDTIVQ…LQELNAHIVV (77 aa)). Position 77 is an N6-acetyllysine (lysine 77). The residue at position 110 (serine 110) is a Phosphoserine. The interval 111–136 (DPEDYTDCPRTPDTPNSDSRSSTSNN) is disordered. A phosphothreonine mark is found at threonine 121 and threonine 124. Positions 121–136 (TPDTPNSDSRSSTSNN) are enriched in low complexity. REM-1 domains lie at 121-204 (TPDT…TNEL) and 207-286 (DNAK…ELPK). A phosphoserine mark is found at serine 303, serine 307, serine 361, and serine 363. Residues 352–383 (ATSVALPGWSPSENRSSFMSRTSKSKSGSSRN) are disordered. The C2 domain maps to 354–474 (SVALPGWSPS…LYLEPQGTLF (121 aa)). Residues 366–382 (RSSFMSRTSKSKSGSSR) are compositionally biased toward low complexity. The interval 383–464 (NLLKTDDLSN…FLDNQRHGMA (82 aa)) is necessary to rescue apical junction formation. Phosphoserine is present on residues serine 536, serine 584, serine 621, and serine 632. Residues 570 to 590 (DLEPEAPPAPPRASSLGEIDD) form a disordered region. A Protein kinase domain is found at 658 to 917 (FRCCAVLGRG…AEDVKKHPFF (260 aa)). Residues 664–672 (LGRGHFGKV) and lysine 687 contribute to the ATP site. Catalysis depends on aspartate 783, which acts as the Proton acceptor. Position 817 is a phosphothreonine; by PDPK1 (threonine 817). Residues 918–978 (RLTDWSALLD…EEEQEMFRDF (61 aa)) form a necessary for the catalytic activity region. In terms of domain architecture, AGC-kinase C-terminal spans 918 to 985 (RLTDWSALLD…RDFDYVADWC (68 aa)). Position 953 is a phosphoserine (serine 953). Threonine 959 carries the post-translational modification Phosphothreonine. A negatively regulates the responsiveness of the catalytic activity by cardiolipin and is required for optimal activation by the GTP-bound RhoA region spans residues 979–985 (DYVADWC).

The protein belongs to the protein kinase superfamily. AGC Ser/Thr protein kinase family. PKC subfamily. In terms of assembly, interacts (via the REM repeats) with RHOA (GTP-bound form preferentially) and interacts (via the REM repeats) with RAC1 (GTP-bound form preferentially); the interactions induce its autophosphorylation. Interacts with RHOC. Interacts with NCK1 (via SH3 domains) and NCK2. Interacts with CD44. Interacts (via C-terminal kinase domain) with PDPK1; the interaction stimulates PDPK1 kinase activity. Interacts with MAP3K2; the interaction activates PRK2 kinase activity in a MAP3K2-independent kinase activity. Interacts (via C-terminal domain) with AKT1; the interaction occurs with the C-terminal cleavage product of PRK2 in apoptotic cells. Interacts (via C-terminus) with PTPN13 (via PDZ 3 domain). Interacts with CDK10. Phosphorylated during mitosis. Autophosphorylated. Phosphorylated. Binding to Rho and Rac promotes autophosphorylation and phosphorylation on serine and threonine residues. Phosphorylated by CDK10. In terms of processing, proteolytically cleaved by caspase-3 during the induction of apoptotic cell death. Activated by limited proteolysis with trypsin. Expressed in liver (at protein level).

The protein resides in the cytoplasm. It localises to the nucleus. The protein localises to the membrane. Its subcellular location is the cell projection. It is found in the lamellipodium. The protein resides in the cytoskeleton. It localises to the cleavage furrow. The protein localises to the midbody. Its subcellular location is the cell junction. It catalyses the reaction L-seryl-[protein] + ATP = O-phospho-L-seryl-[protein] + ADP + H(+). The enzyme catalyses L-threonyl-[protein] + ATP = O-phospho-L-threonyl-[protein] + ADP + H(+). With respect to regulation, kinase activity is activated upon binding to GTP-bound Rho1/Rac1 GTPases. Activated by caspase-3 (CASP3) cleavage during apoptosis. Activated by lipids, particularly cardiolipin and to a lesser extent by other acidic phospholipids and unsaturated fatty acids. Two specific sites, Thr-817 (activation loop of the kinase domain) and Thr-959 (turn motif), need to be phosphorylated for its full activation. PKC-related serine/threonine-protein kinase and Rho/Rac effector protein that participates in specific signal transduction responses in the cell. Plays a role in the regulation of cell cycle progression, actin cytoskeleton assembly, cell migration, cell adhesion, tumor cell invasion and transcription activation signaling processes. Phosphorylates CTTN in hyaluronan-induced astrocytes and hence decreases CTTN ability to associate with filamentous actin. Phosphorylates HDAC5, therefore lead to impair HDAC5 import. Direct RhoA target required for the regulation of the maturation of primordial junctions into apical junction formation in bronchial epithelial cells. Required for G2/M phases of the cell cycle progression and abscission during cytokinesis in a ECT2-dependent manner. Stimulates FYN kinase activity that is required for establishment of skin cell-cell adhesion during keratinocytes differentiation. Regulates epithelial bladder cells speed and direction of movement during cell migration and tumor cell invasion. Inhibits Akt pro-survival-induced kinase activity. Mediates Rho protein-induced transcriptional activation via the c-fos serum response factor (SRF). Involved in the negative regulation of ciliogenesis. This chain is Serine/threonine-protein kinase N2 (Pkn2), found in Rattus norvegicus (Rat).